An 838-amino-acid polypeptide reads, in one-letter code: pre-rRNA 2'-O-ribose RNA methyltransferase FTSJ3 (838 aa).

S-adenosyl-L-methionine contacts are provided by G56, W58, D76, D92, and D117. The Proton acceptor role is filled by K157. The segment at I332–N367 is disordered. S333, S335, and S336 each carry phosphoserine. Residues S336–V348 show a composition bias toward acidic residues. A Citrulline modification is found at R390. The tract at residues I453–S482 is disordered. The span at D457 to E474 shows a compositional bias: acidic residues. Residues S532 and S545 each carry the phosphoserine modification. Positions D537–G639 are disordered. K571 is covalently cross-linked (Glycyl lysine isopeptide (Lys-Gly) (interchain with G-Cter in SUMO2)). At S576 the chain carries Phosphoserine. Glycyl lysine isopeptide (Lys-Gly) (interchain with G-Cter in SUMO2) cross-links involve residues K634 and K650. S667 is subject to Phosphoserine. K669 is covalently cross-linked (Glycyl lysine isopeptide (Lys-Gly) (interchain with G-Cter in SUMO2)). At S679 the chain carries Phosphoserine. Residue K701 forms a Glycyl lysine isopeptide (Lys-Gly) (interchain with G-Cter in SUMO2) linkage. Positions I730–E768 form a coiled coil. At R774 the chain carries Citrulline. Over residues V802–F812 the composition is skewed to basic residues. Residues V802 to K838 form a disordered region. Positions K813–K829 are enriched in basic and acidic residues.

It belongs to the class I-like SAM-binding methyltransferase superfamily. RNA methyltransferase RlmE family. SPB1 subfamily. Interacts with NIP7. Citrullinated by PADI4.

The protein localises to the nucleus. It localises to the nucleolus. It carries out the reaction a ribonucleotide in rRNA + S-adenosyl-L-methionine = a 2'-O-methylribonucleotide in rRNA + S-adenosyl-L-homocysteine + H(+). In terms of biological role, RNA 2'-O-methyltransferase involved in the processing of the 34S pre-rRNA to 18S rRNA and in 40S ribosomal subunit formation. The chain is pre-rRNA 2'-O-ribose RNA methyltransferase FTSJ3 (Ftsj3) from Mus musculus (Mouse).